The primary structure comprises 550 residues: ATP synthase subunit alpha (550 aa).

Residue 172–179 (GDRKTGKT) participates in ATP binding. Positions 521 to 550 (EPAAEPLAGEEDRETVTRFHDDATDRPAGS) are disordered. Residues 534-550 (ETVTRFHDDATDRPAGS) show a composition bias toward basic and acidic residues.

It belongs to the ATPase alpha/beta chains family. F-type ATPases have 2 components, CF(1) - the catalytic core - and CF(0) - the membrane proton channel. CF(1) has five subunits: alpha(3), beta(3), gamma(1), delta(1), epsilon(1). CF(0) has three main subunits: a(1), b(2) and c(9-12). The alpha and beta chains form an alternating ring which encloses part of the gamma chain. CF(1) is attached to CF(0) by a central stalk formed by the gamma and epsilon chains, while a peripheral stalk is formed by the delta and b chains.

It is found in the cell membrane. It carries out the reaction ATP + H2O + 4 H(+)(in) = ADP + phosphate + 5 H(+)(out). In terms of biological role, produces ATP from ADP in the presence of a proton gradient across the membrane. The alpha chain is a regulatory subunit. The sequence is that of ATP synthase subunit alpha from Salinispora tropica (strain ATCC BAA-916 / DSM 44818 / JCM 13857 / NBRC 105044 / CNB-440).